A 154-amino-acid chain; its full sequence is Proteasome subunit beta type-4 (154 aa).

Methionine 1 carries the post-translational modification N-acetylmethionine. Residues 1–45 (MESILESRSGHWAGGPAPGQFYRIPPTPGSIVDPXSVLYGSPITR) constitute a propeptide that is removed on maturation. Tyrosine 102 carries the phosphotyrosine modification.

This sequence belongs to the peptidase T1B family. As to quaternary structure, the 26S proteasome consists of a 20S proteasome core and two 19S regulatory subunits. The 20S proteasome core is a barrel-shaped complex made of 28 subunits that are arranged in four stacked rings. The two outer rings are each formed by seven alpha subunits, and the two inner rings are formed by seven beta subunits. The proteolytic activity is exerted by three beta-subunits PSMB5, PSMB6 and PSMB7. Forms a ternary complex with SMAD1 and OAZ1 before PSMB4 is incorporated into the 20S proteasome. Interacts with PRPF19.

Its subcellular location is the cytoplasm. It localises to the nucleus. Non-catalytic component of the 20S core proteasome complex involved in the proteolytic degradation of most intracellular proteins. This complex plays numerous essential roles within the cell by associating with different regulatory particles. Associated with two 19S regulatory particles, forms the 26S proteasome and thus participates in the ATP-dependent degradation of ubiquitinated proteins. The 26S proteasome plays a key role in the maintenance of protein homeostasis by removing misfolded or damaged proteins that could impair cellular functions, and by removing proteins whose functions are no longer required. Associated with the PA200 or PA28, the 20S proteasome mediates ubiquitin-independent protein degradation. This type of proteolysis is required in several pathways including spermatogenesis (20S-PA200 complex) or generation of a subset of MHC class I-presented antigenic peptides (20S-PA28 complex). SMAD1/OAZ1/PSMB4 complex mediates the degradation of the CREBBP/EP300 repressor SNIP1. The sequence is that of Proteasome subunit beta type-4 (PSMB4) from Sus scrofa (Pig).